Consider the following 448-residue polypeptide: uncharacterized protein (448 aa).

A compositionally biased stretch (basic and acidic residues) spans serine 187–glycine 198. Disordered stretches follow at residues serine 187–arginine 221, leucine 243–methionine 270, and leucine 291–glycine 361. Low complexity predominate over residues leucine 243–serine 261. Positions phenylalanine 307 to arginine 334 are enriched in basic and acidic residues.

It to M.tuberculosis Rv0025 and Rv0739.

This is an uncharacterized protein from Mycobacterium tuberculosis (strain CDC 1551 / Oshkosh).